Here is a 139-residue protein sequence, read N- to C-terminus: Ribosome-binding factor A (139 aa).

Positions 120–139 (PENLLAVEDNTDEDDESFSE) are disordered. Positions 128-139 (DNTDEDDESFSE) are enriched in acidic residues.

Belongs to the RbfA family. In terms of assembly, monomer. Binds 30S ribosomal subunits, but not 50S ribosomal subunits or 70S ribosomes.

It localises to the cytoplasm. Its function is as follows. One of several proteins that assist in the late maturation steps of the functional core of the 30S ribosomal subunit. Associates with free 30S ribosomal subunits (but not with 30S subunits that are part of 70S ribosomes or polysomes). Required for efficient processing of 16S rRNA. May interact with the 5'-terminal helix region of 16S rRNA. This chain is Ribosome-binding factor A, found in Nostoc punctiforme (strain ATCC 29133 / PCC 73102).